The sequence spans 56 residues: Calsequestrin-1 (56 aa).

Tyr9 carries the post-translational modification Phosphotyrosine. A Phosphoserine modification is found at Ser47.

This sequence belongs to the calsequestrin family. As to quaternary structure, monomer; increases in response to a depletion of intracellular calcium. Homodimer. Homotetramer and homopolymer. Can form linear homooligomers. Ca(2+) ions promote oligomerization. Interacts (via C-terminal end and preferentially with the monomeric form) with STIM1; this interaction increases in response to a depletion of intracellular calcium, decreases both STIM1 aggregation and clustering, interaction of STIM1 with ORAI1 and store-operated Ca(2+) entry (SOCE) activity. Interacts with ASPH and TRDN. In terms of processing, N-glycosylated.

It is found in the endoplasmic reticulum. The protein resides in the sarcoplasmic reticulum. Its subcellular location is the sarcoplasmic reticulum lumen. The protein localises to the sarcoplasmic reticulum membrane. It localises to the mitochondrion matrix. Functionally, calsequestrin is a high-capacity, moderate affinity, calcium-binding protein and thus acts as an internal calcium store in muscle. Calcium ions are bound by clusters of acidic residues at the protein surface, often at the interface between subunits. Can bind around 80 Ca(2+) ions. Regulates the release of lumenal Ca(2+) via the calcium release channel RYR1; this plays an important role in triggering muscle contraction. Negatively regulates store-operated Ca(2+) entry (SOCE) activity. The protein is Calsequestrin-1 (CASQ1) of Canis lupus familiaris (Dog).